A 232-amino-acid polypeptide reads, in one-letter code: Methylthioribulose-1-phosphate dehydratase (232 aa).

Cys-91 lines the substrate pocket. The Zn(2+) site is built by His-109, His-111, and His-191.

This sequence belongs to the aldolase class II family. MtnB subfamily. The cofactor is Zn(2+).

It localises to the cytoplasm. The catalysed reaction is 5-(methylsulfanyl)-D-ribulose 1-phosphate = 5-methylsulfanyl-2,3-dioxopentyl phosphate + H2O. The protein operates within amino-acid biosynthesis; L-methionine biosynthesis via salvage pathway; L-methionine from S-methyl-5-thio-alpha-D-ribose 1-phosphate: step 2/6. Catalyzes the dehydration of methylthioribulose-1-phosphate (MTRu-1-P) into 2,3-diketo-5-methylthiopentyl-1-phosphate (DK-MTP-1-P). The chain is Methylthioribulose-1-phosphate dehydratase from Schizosaccharomyces japonicus (strain yFS275 / FY16936) (Fission yeast).